The primary structure comprises 436 residues: GTPase Der (436 aa).

EngA-type G domains follow at residues 4–167 (PVIA…PKIE) and 176–351 (IRFS…ESHS). GTP-binding positions include 10-17 (GRPNVGKS), 57-61 (DTGGI), 119-122 (NKVD), 182-189 (GRPNVGKS), 229-233 (DTAGM), and 294-297 (NKWD). One can recognise a KH-like domain in the interval 352-436 (IRVQTNVLND…PIHIIARARD (85 aa)).

Belongs to the TRAFAC class TrmE-Era-EngA-EngB-Septin-like GTPase superfamily. EngA (Der) GTPase family. Associates with the 50S ribosomal subunit.

Its function is as follows. GTPase that plays an essential role in the late steps of ribosome biogenesis. The sequence is that of GTPase Der from Bacillus cereus (strain G9842).